Reading from the N-terminus, the 1011-residue chain is Liprin-beta-1 (1011 aa).

At S37 the chain carries Phosphoserine. T39 is subject to Phosphothreonine. At S40 the chain carries Phosphoserine. Residues 156 to 405 are a coiled coil; sequence QQELLSRTSL…VPEEFHTTIL (250 aa). Position 322 is an N6-acetyllysine (K322). Disordered stretches follow at residues 420-439 and 463-634; these read ETSE…EEND and KSSS…RDLG. A phosphoserine mark is found at S434 and S466. A compositionally biased stretch (basic and acidic residues) spans 470–492; it reads LKKETSDGEKETIQKTSEDRAPA. K471 is covalently cross-linked (Glycyl lysine isopeptide (Lys-Gly) (interchain with G-Cter in SUMO2)). S523 and S540 each carry phosphoserine. The segment covering 546–556 has biased composition (basic and acidic residues); it reads ETEKETAEHLD. Position 579 is a phosphoserine (S579). Positions 584–598 are enriched in basic residues; sequence KKSRGIMKLFGKLRR. A phosphoserine mark is found at S601 and S636. SAM domains follow at residues 647-711 and 719-782; these read WTKE…LGSE and LDFN…LRIN. The residue at position 794 (S794) is a Phosphoserine. In terms of domain architecture, SAM 3 spans 804 to 876; sequence VQKWTNHRVM…ATHFNLLIGA (73 aa). A phosphoserine mark is found at S999, S1001, and S1003. The residue at position 1005 (T1005) is a Phosphothreonine.

This sequence belongs to the liprin family. Liprin-beta subfamily. Forms homodimers and heterodimers. Interacts with S100A4 in a Ca(2+)-dependent mode. Part of a cortical microtubule stabilization complex (CMSC) composed of KANK1, PPFIA1, PPFIBP1, ERC1/ELKS, PHLDB2/LL5beta, CLASPs, KIF21A and possibly additional interactors; within CMSCs KANK1 and PHLDB2/LL5beta seem to be the core components for recruiting microtubule-binding proteins KIF21A and CLASPs, whereas PPFIA1, PPFIBP1 and ERC1/ELKS serve as scaffolds for protein clustering. Interacts with KANK1 (via CC1 domain, residues 244-339). Widely expressed. Absent in liver.

It is found in the cytoplasm. Its subcellular location is the cell cortex. Its function is as follows. May regulate the disassembly of focal adhesions. Did not bind receptor-like tyrosine phosphatases type 2A. The sequence is that of Liprin-beta-1 (PPFIBP1) from Homo sapiens (Human).